The primary structure comprises 269 residues: MRSLADFEFNNAPLCDGMILASEMIRLDFPTQFVYDELERLVSLAQEEISQLLSQDEQLEKLLALFYGEWGFTDSRGVYRLSDALWLDKVLKKRQGSAVSLGAILLWIANRLDLPLVPVIFPTQLILRIESLEGEMWLINPFNGETLDEHTLEVWLKGNISPVAELFNEDLDEADNAEVIRKLLDTLKSSLMEERQMELALRVSEALLQFNPEDPYEIRDRGLIYAQLECEHVALTDLSYFVEQCPEDPISEMIRAQINTIAHKQIVLH.

Belongs to the UPF0162 family.

Its function is as follows. Required for maximal expression of sirC, not required to invade host cells. The protein is Protein SirB1 (sirB1) of Salmonella typhi.